The following is a 546-amino-acid chain: CTP synthase (546 aa).

The amidoligase domain stretch occupies residues 1–269 (MNSNTKIIFV…DAKLVELLNL (269 aa)). Residue Ser-16 participates in CTP binding. UTP is bound at residue Ser-16. ATP is bound by residues 17–22 (SLGKGV) and Asp-74. Mg(2+)-binding residues include Asp-74 and Glu-143. Residues 150-152 (DIE), 190-195 (KTKPTQ), and Lys-226 each bind CTP. UTP contacts are provided by residues 190-195 (KTKPTQ) and Lys-226. The region spanning 294-546 (TIAMVGKYVS…IQAAIENSNN (253 aa)) is the Glutamine amidotransferase type-1 domain. L-glutamine is bound at residue Gly-356. The active-site Nucleophile; for glutamine hydrolysis is the Cys-383. L-glutamine-binding positions include 384–387 (LGMQ), Glu-407, and Arg-474. Active-site residues include His-519 and Glu-521.

It belongs to the CTP synthase family. As to quaternary structure, homotetramer.

The catalysed reaction is UTP + L-glutamine + ATP + H2O = CTP + L-glutamate + ADP + phosphate + 2 H(+). It carries out the reaction L-glutamine + H2O = L-glutamate + NH4(+). It catalyses the reaction UTP + NH4(+) + ATP = CTP + ADP + phosphate + 2 H(+). It functions in the pathway pyrimidine metabolism; CTP biosynthesis via de novo pathway; CTP from UDP: step 2/2. Its activity is regulated as follows. Allosterically activated by GTP, when glutamine is the substrate; GTP has no effect on the reaction when ammonia is the substrate. The allosteric effector GTP functions by stabilizing the protein conformation that binds the tetrahedral intermediate(s) formed during glutamine hydrolysis. Inhibited by the product CTP, via allosteric rather than competitive inhibition. Functionally, catalyzes the ATP-dependent amination of UTP to CTP with either L-glutamine or ammonia as the source of nitrogen. Regulates intracellular CTP levels through interactions with the four ribonucleotide triphosphates. In Francisella tularensis subsp. mediasiatica (strain FSC147), this protein is CTP synthase.